Here is a 101-residue protein sequence, read N- to C-terminus: Small ribosomal subunit protein uS10 (101 aa).

It belongs to the universal ribosomal protein uS10 family. Part of the 30S ribosomal subunit.

Its function is as follows. Involved in the binding of tRNA to the ribosomes. In Saccharopolyspora erythraea (strain ATCC 11635 / DSM 40517 / JCM 4748 / NBRC 13426 / NCIMB 8594 / NRRL 2338), this protein is Small ribosomal subunit protein uS10.